Here is a 343-residue protein sequence, read N- to C-terminus: MQVKTQSCVVAGKKTVAVTEQTIDWNNNGTLVQITRGGICGSDLHYYQEGKVGNFMIKAPMVLGHEVIGKVIHSDSSELHEGQTVAINPSKPCGHCKYCIEHNENQCTDMRFFGSAMYFPHVDGGFTRYKMVETSQCVPYPAKADEKVMAFAEPLAVAIHAAHQAGELQGKRVFISGVGPIGCLIVSAVKTLGAAEIVCADVSPRSLSLGKEMGADVLVNPQNDDMDHWKAEKGYFDVSFEVSGHPSSVNTCLEVTRARGVMVQVGMGGAMAEFPMMTLIGKEISLRGSFRFTSEFNTAVSWLANGVINPLPLLSAEYPFTDLEEALRFAGDKTQAAKVQLVF.

Residues cysteine 40, histidine 65, cysteine 93, cysteine 96, cysteine 99, cysteine 107, and glutamate 153 each contribute to the Zn(2+) site.

It belongs to the zinc-containing alcohol dehydrogenase family. Zn(2+) serves as cofactor.

The catalysed reaction is L-idonate + NADP(+) = 5-dehydro-D-gluconate + NADPH + H(+). It carries out the reaction L-idonate + NAD(+) = 5-dehydro-D-gluconate + NADH + H(+). It participates in carbohydrate acid metabolism; L-idonate degradation. Its function is as follows. Catalyzes the NADH/NADPH-dependent oxidation of L-idonate to 5-ketogluconate (5KG). The protein is L-idonate 5-dehydrogenase (NAD(P)(+)) (idnD) of Escherichia coli (strain K12).